The sequence spans 341 residues: MDYQQAGVDIEAGRSFVKTIKDNVESTYRPGVLGGLGGFGGCFEIPAGYRQPVLISGTDGVGTKLKIAHQTDQHHTVGIDLVAMCVNDILTSGAEPLFFLDYLATGKLEPEQLAQVVAGIVEGCKQSGCALLGGETAEMPGFYQAGEYDLAGFCVGIVEKSEILDGSQVQVGDVAIALPSSGVHSNGFSLVRKIIEMNQLSWDDKPAAFQGKTLGEVFLTPTQIYVQAIQGALKAKMEIHGMAHITGGGLPENLPRCLQANQSMAIDPSTWEIPTLFQWLQTMGDVPQAAMWDTFNMGVGYVVIVPAPKAAENVAWFKAQGIAAWQVGTVVAGQGEVLGLQ.

Belongs to the AIR synthase family.

The protein localises to the cytoplasm. The enzyme catalyses 2-formamido-N(1)-(5-O-phospho-beta-D-ribosyl)acetamidine + ATP = 5-amino-1-(5-phospho-beta-D-ribosyl)imidazole + ADP + phosphate + H(+). The protein operates within purine metabolism; IMP biosynthesis via de novo pathway; 5-amino-1-(5-phospho-D-ribosyl)imidazole from N(2)-formyl-N(1)-(5-phospho-D-ribosyl)glycinamide: step 2/2. This Picosynechococcus sp. (strain ATCC 27264 / PCC 7002 / PR-6) (Agmenellum quadruplicatum) protein is Phosphoribosylformylglycinamidine cyclo-ligase.